Here is a 73-residue protein sequence, read N- to C-terminus: Sec-independent protein translocase protein TatA (73 aa).

A helical transmembrane segment spans residues 1–21 (MGSFSIGHWLIVLAIIVLLFG). Residues 43 to 73 (MEDTTPEKSEKVEHKEESATSQKIEETTKNA) form a disordered region.

The protein belongs to the TatA/E family. In terms of assembly, the Tat system comprises two distinct complexes: a TatABC complex, containing multiple copies of TatA, TatB and TatC subunits, and a separate TatA complex, containing only TatA subunits. Substrates initially bind to the TatABC complex, which probably triggers association of the separate TatA complex to form the active translocon.

It localises to the cell inner membrane. Functionally, part of the twin-arginine translocation (Tat) system that transports large folded proteins containing a characteristic twin-arginine motif in their signal peptide across membranes. TatA could form the protein-conducting channel of the Tat system. The polypeptide is Sec-independent protein translocase protein TatA (Campylobacter concisus (strain 13826)).